The following is a 586-amino-acid chain: Acyl-coenzyme A synthetase ACSM3, mitochondrial (586 aa).

Residues 1–27 (MLARVTRKMLRHAKCFQRLAIFGSVRA) constitute a mitochondrion transit peptide. An N6-succinyllysine mark is found at K73 and K106. Residue K157 is modified to N6-acetyllysine. ATP-binding positions include 235-243 (TSGTSGYPK), 374-379 (EGYGQT), D461, R476, and K572.

It belongs to the ATP-dependent AMP-binding enzyme family. It depends on Mg(2+) as a cofactor. Mn(2+) serves as cofactor.

It is found in the mitochondrion. Its subcellular location is the mitochondrion matrix. It catalyses the reaction a medium-chain fatty acid + ATP + CoA = a medium-chain fatty acyl-CoA + AMP + diphosphate. It carries out the reaction propanoate + ATP + CoA = propanoyl-CoA + AMP + diphosphate. The catalysed reaction is butanoate + ATP + CoA = butanoyl-CoA + AMP + diphosphate. The enzyme catalyses 2-methylpropanoate + ATP + CoA = 2-methylpropanoyl-CoA + AMP + diphosphate. It catalyses the reaction 2-methylbutanoate + ATP + CoA = 2-methylbutanoyl-CoA + AMP + diphosphate. It carries out the reaction octanoate + ATP + CoA = octanoyl-CoA + AMP + diphosphate. Catalyzes the activation of fatty acids by CoA to produce an acyl-CoA, the first step in fatty acid metabolism. Capable of activating medium-chain fatty acids with a preference for isobutyrate among fatty acids with 2-6 carbon atoms. This is Acyl-coenzyme A synthetase ACSM3, mitochondrial (ACSM3) from Homo sapiens (Human).